A 124-amino-acid polypeptide reads, in one-letter code: uncharacterized protein (124 aa).

Residues 2 to 22 (AIIIAIIAAVIVIAALITFNV) form a helical membrane-spanning segment. The interval 24-124 (NASPGPEKQE…ALLSMKNKKK (101 aa)) is disordered. Composition is skewed to basic and acidic residues over residues 30–58 (EKQE…RAAE), 67–81 (DSPK…DDIY), and 89–113 (KHSD…RSYR).

It localises to the membrane. This is an uncharacterized protein from Bacillus subtilis (strain 168).